Here is a 414-residue protein sequence, read N- to C-terminus: 3-phosphoshikimate 1-carboxyvinyltransferase (414 aa).

Residues Lys-20, Ser-21, and Arg-25 each contribute to the 3-phosphoshikimate site. A phosphoenolpyruvate-binding site is contributed by Lys-20. 2 residues coordinate phosphoenolpyruvate: Gly-88 and Arg-116. The 3-phosphoshikimate site is built by Thr-157, Ser-158, Gln-159, Ser-183, Asp-297, and Lys-324. Gln-159 serves as a coordination point for phosphoenolpyruvate. Asp-297 functions as the Proton acceptor in the catalytic mechanism. Positions 328, 369, and 395 each coordinate phosphoenolpyruvate.

The protein belongs to the EPSP synthase family. As to quaternary structure, monomer.

It is found in the cytoplasm. It catalyses the reaction 3-phosphoshikimate + phosphoenolpyruvate = 5-O-(1-carboxyvinyl)-3-phosphoshikimate + phosphate. The protein operates within metabolic intermediate biosynthesis; chorismate biosynthesis. Its function is as follows. Catalyzes the transfer of the enolpyruvyl moiety of phosphoenolpyruvate (PEP) to the 5-hydroxyl of shikimate-3-phosphate (S3P) to produce enolpyruvyl shikimate-3-phosphate and inorganic phosphate. In Caldivirga maquilingensis (strain ATCC 700844 / DSM 13496 / JCM 10307 / IC-167), this protein is 3-phosphoshikimate 1-carboxyvinyltransferase.